Here is a 479-residue protein sequence, read N- to C-terminus: RAC-gamma serine/threonine-protein kinase (479 aa).

At serine 2 the chain carries N-acetylserine. The region spanning 5–107 (TIVKEGWVQK…WTEAIQAVAD (103 aa)) is the PH domain. The cysteines at positions 59 and 76 are disulfide-linked. The 258-residue stretch at 148–405 (FDYLKLLGKG…AKEIMRHSFF (258 aa)) folds into the Protein kinase domain. Residues 154-162 (LGKGTFGKV) and lysine 177 each bind ATP. Aspartate 271 functions as the Proton acceptor in the catalytic mechanism. Residues cysteine 293 and cysteine 307 are joined by a disulfide bond. The O-linked (GlcNAc) threonine glycan is linked to threonine 302. Threonine 305 is modified (phosphothreonine; by PDPK1). Threonine 309 is a glycosylation site (O-linked (GlcNAc) threonine). Positions 406-479 (SGVNWQDVYD…QFSYSASGRE (74 aa)) constitute an AGC-kinase C-terminal domain. At threonine 447 the chain carries Phosphothreonine. Residues 458–479 (DCMDNERRPHFPQFSYSASGRE) form a disordered region. A Phosphoserine; by PKC/PRKCZ modification is found at serine 472. Serine 472 is a glycosylation site (O-linked (GlcNAc) serine; alternate).

It belongs to the protein kinase superfamily. AGC Ser/Thr protein kinase family. RAC subfamily. In terms of assembly, interacts (via PH domain) with TCL1A; this enhances AKT3 phosphorylation and activation. Interacts with TRAF6. Interacts with KCTD20. Interacts with BTBD10. Post-translationally, phosphorylation on Thr-305 and Ser-472 is required for full activity. Phosphorylation of the activation loop at Thr-305 by PDPK1/PDK1 is a prerequisite for full activation. Phosphorylation at Ser-472 by mTORC2 in response to growth factors plays a key role in AKT1 activation by facilitating subsequent phosphorylation of the activation loop by PDPK1/PDK1. Ubiquitinated. When fully phosphorylated and translocated into the nucleus, undergoes 'Lys-48'-polyubiquitination catalyzed by TTC3, leading to its degradation by the proteasome. In terms of processing, O-GlcNAcylation at Thr-302 and Thr-309 inhibits activating phosphorylation at Thr-305 via disrupting the interaction between AKT and PDPK1/PDK1. In adult tissues, it is highly expressed in brain, lung and kidney, but weakly in heart, testis and liver. In fetal tissues, it is highly expressed in heart, liver and brain and not at all in kidney.

The protein localises to the nucleus. It is found in the cytoplasm. Its subcellular location is the membrane. It catalyses the reaction L-seryl-[protein] + ATP = O-phospho-L-seryl-[protein] + ADP + H(+). The catalysed reaction is L-threonyl-[protein] + ATP = O-phospho-L-threonyl-[protein] + ADP + H(+). Two specific sites, one in the kinase domain (Thr-305) and the other in the C-terminal regulatory region (Ser-472), need to be phosphorylated for its full activation. IGF-1 leads to the activation of AKT3, which may play a role in regulating cell survival. In terms of biological role, AKT3 is one of 3 closely related serine/threonine-protein kinases (AKT1, AKT2 and AKT3) called the AKT kinase, and which regulate many processes including metabolism, proliferation, cell survival, growth and angiogenesis. This is mediated through serine and/or threonine phosphorylation of a range of downstream substrates. Over 100 substrate candidates have been reported so far, but for most of them, no isoform specificity has been reported. AKT3 is the least studied AKT isoform. It plays an important role in brain development and is crucial for the viability of malignant glioma cells. AKT3 isoform may also be the key molecule in up-regulation and down-regulation of MMP13 via IL13. Required for the coordination of mitochondrial biogenesis with growth factor-induced increases in cellular energy demands. Down-regulation by RNA interference reduces the expression of the phosphorylated form of BAD, resulting in the induction of caspase-dependent apoptosis. This chain is RAC-gamma serine/threonine-protein kinase (AKT3), found in Homo sapiens (Human).